A 252-amino-acid chain; its full sequence is Adaptation to cold protein B (252 aa).

As to quaternary structure, interacts with AtcC, but not with AtcA and AtcJ. Interacts with the RNA polymerase subunits RpoB and RpoC.

In terms of biological role, involved in cold adaptation. Directly interacts with the RNA polymerase and decreases its activity. May direct the DnaK chaperone to the RNA polymerase to sustain life at low temperatures. Overproduction prevents bacterial growth due to RNA polymerase inhibition. In Shewanella oneidensis (strain ATCC 700550 / JCM 31522 / CIP 106686 / LMG 19005 / NCIMB 14063 / MR-1), this protein is Adaptation to cold protein B.